Consider the following 78-residue polypeptide: Acyl carrier protein (78 aa).

The Carrier domain occupies 2–77; the sequence is STIEERVKKI…EAIDYINAHA (76 aa). Position 37 is an O-(pantetheine 4'-phosphoryl)serine (S37).

Belongs to the acyl carrier protein (ACP) family. 4'-phosphopantetheine is transferred from CoA to a specific serine of apo-ACP by AcpS. This modification is essential for activity because fatty acids are bound in thioester linkage to the sulfhydryl of the prosthetic group.

Its subcellular location is the cytoplasm. It functions in the pathway lipid metabolism; fatty acid biosynthesis. Carrier of the growing fatty acid chain in fatty acid biosynthesis. This Stutzerimonas stutzeri (strain A1501) (Pseudomonas stutzeri) protein is Acyl carrier protein.